The following is a 650-amino-acid chain: MICOS complex subunit MIC60, mitochondrial (650 aa).

A mitochondrion-targeting transit peptide spans 1–34 (MLRKSVLELSSRLSIKRFPRNLGAQRFHLSSSRN). Positions 26–74 (RFHLSSSRNASTSGKNGLPGAKPVGKPDASKVDPPKVTPPPPTKGNSSK) are disordered. Over residues 28-40 (HLSSSRNASTSGK) the composition is skewed to polar residues. Residues 35–74 (ASTSGKNGLPGAKPVGKPDASKVDPPKVTPPPPTKGNSSK) are Mitochondrial matrix-facing. Residues 75-95 (VVIGGVAIAGAFLVAYQTGYL) traverse the membrane as a helical segment. The Mitochondrial intermembrane segment spans residues 96-549 (DQYLGKEQQK…FDTLKGTLRH (454 aa)). Disordered regions lie at residues 121–168 (EAHH…ESDL), 239–267 (QSSS…EDGI), and 284–304 (EGSD…TKET). Residues 284–299 (EGSDTESTGSSSIGEQ) are compositionally biased toward low complexity. Coiled-coil stretches lie at residues 345–369 (AQVF…LRAR) and 396–430 (KAIQ…LAKA). Residues 550–570 (FSLIPPGGGGILAHSLAHVAS) form a helical membrane-spanning segment. Residues 571 to 650 (SLKFKEVDQA…QSYATCVSLT (80 aa)) are Mitochondrial matrix-facing.

The protein belongs to the MICOS complex subunit Mic60 family. As to quaternary structure, component of the mitochondrial contact site and cristae organizing system (MICOS) complex. The MICOS complex associates with mitochondrial outer membrane proteins. Present in a large lipid-enriched complex called mitochondrial transmembrane lipoprotein (MTL) complex made of proteins located in the two mitochondrial membranes, including the TOM complex and the core components of the MICOS complex and containing at least digalactosyldiacylglycerol (DGDG). Binds to TOM40-1. Component of a mitochondrial large protein complex that contains, at least, MIC60, DGS1, TOM40, TOM20 proteins, and petC/RISP.

The protein localises to the mitochondrion inner membrane. Functionally, component of the MICOS complex, a large protein complex of the mitochondrial inner membrane that plays crucial roles in the maintenance of crista junctions, inner membrane architecture, and formation of contact sites to the outer membrane. Plays a role in keeping cristae membranes connected to the inner boundary membrane. Also promotes protein import via the mitochondrial intermembrane space assembly (MIA) pathway. Involved in the maintenance of mitochondria morphology. Binds to glycerolipids such as cardiolipin (CL). Contributes to the export of phosphatidylethanolamine (PE) from mitochondria and to the import of galactoglycerolipids from plastids during phosphate (Pi) starvation. Promotes lipid desorption from membranes, likely as an initial step for lipid transfer, and regulates probably the tethering between the inner and outer membranes of mitochondria by binding to TOM40 proteins. The polypeptide is MICOS complex subunit MIC60, mitochondrial (Arabidopsis thaliana (Mouse-ear cress)).